A 247-amino-acid polypeptide reads, in one-letter code: NAD(P)H-quinone oxidoreductase subunit K (247 aa).

[4Fe-4S] cluster contacts are provided by Cys-63, Cys-64, Cys-128, and Cys-159. Residues 218–247 (TRQAPPKELTEAIGMEVPPALASQKQKEEA) form a disordered region.

Belongs to the complex I 20 kDa subunit family. In terms of assembly, NDH-1 can be composed of about 15 different subunits; different subcomplexes with different compositions have been identified which probably have different functions. Requires [4Fe-4S] cluster as cofactor.

Its subcellular location is the cellular thylakoid membrane. The catalysed reaction is a plastoquinone + NADH + (n+1) H(+)(in) = a plastoquinol + NAD(+) + n H(+)(out). It carries out the reaction a plastoquinone + NADPH + (n+1) H(+)(in) = a plastoquinol + NADP(+) + n H(+)(out). Its function is as follows. NDH-1 shuttles electrons from an unknown electron donor, via FMN and iron-sulfur (Fe-S) centers, to quinones in the respiratory and/or the photosynthetic chain. The immediate electron acceptor for the enzyme in this species is believed to be plastoquinone. Couples the redox reaction to proton translocation, and thus conserves the redox energy in a proton gradient. Cyanobacterial NDH-1 also plays a role in inorganic carbon-concentration. The sequence is that of NAD(P)H-quinone oxidoreductase subunit K from Crocosphaera subtropica (strain ATCC 51142 / BH68) (Cyanothece sp. (strain ATCC 51142)).